The primary structure comprises 386 residues: Succinate--CoA ligase [ADP-forming] subunit beta (386 aa).

In terms of domain architecture, ATP-grasp spans 9–244 (KEVLRKYGVA…LDEEDPKEIE (236 aa)). ATP contacts are provided by residues lysine 46, 53-55 (GRG), glutamate 99, cysteine 102, and glutamate 107. Mg(2+) is bound by residues asparagine 199 and aspartate 213. Substrate is bound by residues asparagine 264 and 321-323 (GIM).

The protein belongs to the succinate/malate CoA ligase beta subunit family. Heterotetramer of two alpha and two beta subunits. It depends on Mg(2+) as a cofactor.

The catalysed reaction is succinate + ATP + CoA = succinyl-CoA + ADP + phosphate. It catalyses the reaction GTP + succinate + CoA = succinyl-CoA + GDP + phosphate. The protein operates within carbohydrate metabolism; tricarboxylic acid cycle; succinate from succinyl-CoA (ligase route): step 1/1. Functionally, succinyl-CoA synthetase functions in the citric acid cycle (TCA), coupling the hydrolysis of succinyl-CoA to the synthesis of either ATP or GTP and thus represents the only step of substrate-level phosphorylation in the TCA. The beta subunit provides nucleotide specificity of the enzyme and binds the substrate succinate, while the binding sites for coenzyme A and phosphate are found in the alpha subunit. This Bacillus licheniformis (strain ATCC 14580 / DSM 13 / JCM 2505 / CCUG 7422 / NBRC 12200 / NCIMB 9375 / NCTC 10341 / NRRL NRS-1264 / Gibson 46) protein is Succinate--CoA ligase [ADP-forming] subunit beta.